Reading from the N-terminus, the 257-residue chain is Ribonuclease HII (257 aa).

In terms of domain architecture, RNase H type-2 spans 72-257 (TYIAGIDEVG…FAPIKDMIQK (186 aa)). A divalent metal cation contacts are provided by Asp78, Glu79, and Asp170.

It belongs to the RNase HII family. Mn(2+) is required as a cofactor. Mg(2+) serves as cofactor.

The protein localises to the cytoplasm. It carries out the reaction Endonucleolytic cleavage to 5'-phosphomonoester.. Endonuclease that specifically degrades the RNA of RNA-DNA hybrids. The protein is Ribonuclease HII of Bacillus cereus (strain ZK / E33L).